A 267-amino-acid polypeptide reads, in one-letter code: Integral membrane protein 2C (267 aa).

Thr37 is modified (phosphothreonine). A helical; Signal-anchor for type II membrane protein transmembrane segment spans residues 55–75 (VGGVCYLSMGMVVLLMGLVFA). One can recognise a BRICHOS domain in the interval 136-230 (FGGGDPADII…LCNGKDTYRL (95 aa)). Cys163 and Cys222 are disulfide-bonded. Residue Asn169 is glycosylated (N-linked (GlcNAc...) asparagine).

Belongs to the ITM2 family. In terms of assembly, interacts with BACE1. Interacts with APP. Interacts with STMN2. Post-translationally, type I membrane-bound, as well as soluble, furin has a pre-eminent role in ITM2C proteolytic processing. PCSK7 and PCSK5 may also be involved although to a lesser extent. The soluble form of PCSK7 is incapable of processing ITM2C. Fails to undergo shedding by ADAM10 and intramembrane cleavage by SPPL2B.

It localises to the lysosome membrane. It is found in the cell membrane. Functionally, negative regulator of amyloid-beta peptide production. May inhibit the processing of APP by blocking its access to alpha- and beta-secretase. Binding to the beta-secretase-cleaved APP C-terminal fragment is negligible, suggesting that ITM2C is a poor gamma-secretase cleavage inhibitor. May play a role in TNF-induced cell death and neuronal differentiation. The polypeptide is Integral membrane protein 2C (ITM2C) (Macaca fascicularis (Crab-eating macaque)).